Reading from the N-terminus, the 384-residue chain is UDP-4-amino-4-deoxy-L-arabinose--oxoglutarate aminotransferase (384 aa).

N6-(pyridoxal phosphate)lysine is present on K182.

The protein belongs to the DegT/DnrJ/EryC1 family. ArnB subfamily. Homodimer. Requires pyridoxal 5'-phosphate as cofactor.

It carries out the reaction UDP-4-amino-4-deoxy-beta-L-arabinose + 2-oxoglutarate = UDP-beta-L-threo-pentopyranos-4-ulose + L-glutamate. Its pathway is nucleotide-sugar biosynthesis; UDP-4-deoxy-4-formamido-beta-L-arabinose biosynthesis; UDP-4-deoxy-4-formamido-beta-L-arabinose from UDP-alpha-D-glucuronate: step 2/3. It functions in the pathway bacterial outer membrane biogenesis; lipopolysaccharide biosynthesis. Catalyzes the conversion of UDP-4-keto-arabinose (UDP-Ara4O) to UDP-4-amino-4-deoxy-L-arabinose (UDP-L-Ara4N). The modified arabinose is attached to lipid A and is required for resistance to polymyxin and cationic antimicrobial peptides. The sequence is that of UDP-4-amino-4-deoxy-L-arabinose--oxoglutarate aminotransferase from Yersinia pseudotuberculosis serotype O:1b (strain IP 31758).